We begin with the raw amino-acid sequence, 464 residues long: uncharacterized protein (464 aa).

Residues 1 to 24 form the signal peptide; sequence MSRFVPRIIPFYLLLLVAGGTANA.

This sequence belongs to the intimin/invasin family.

It localises to the periplasm. This is an uncharacterized protein from Escherichia coli (strain K12).